The primary structure comprises 94 residues: Co-chaperonin GroES (94 aa).

The protein belongs to the GroES chaperonin family. In terms of assembly, heptamer of 7 subunits arranged in a ring. Interacts with the chaperonin GroEL.

The protein localises to the cytoplasm. Together with the chaperonin GroEL, plays an essential role in assisting protein folding. The GroEL-GroES system forms a nano-cage that allows encapsulation of the non-native substrate proteins and provides a physical environment optimized to promote and accelerate protein folding. GroES binds to the apical surface of the GroEL ring, thereby capping the opening of the GroEL channel. This Clostridioides difficile (Peptoclostridium difficile) protein is Co-chaperonin GroES.